Reading from the N-terminus, the 447-residue chain is 1-aminocyclopropane-1-carboxylate synthase 7 (447 aa).

Residues E61 and Y100 each coordinate substrate. An N6-(pyridoxal phosphate)lysine modification is found at K285.

This sequence belongs to the class-I pyridoxal-phosphate-dependent aminotransferase family. Homodimer and heterodimer. In vivo, the relevance of heterodimerization with other ACS enzymes is however unsure. Interacts with XBAT32. Pyridoxal 5'-phosphate serves as cofactor. Ubiquitinated by XBAT32. Ubiquitination probably leads to its subsequent degradation, thus controlling ethylene production. Expressed in roots.

It catalyses the reaction S-adenosyl-L-methionine = 1-aminocyclopropane-1-carboxylate + S-methyl-5'-thioadenosine + H(+). Its pathway is alkene biosynthesis; ethylene biosynthesis via S-adenosyl-L-methionine; ethylene from S-adenosyl-L-methionine: step 1/2. Functionally, 1-aminocyclopropane-1-carboxylate synthase (ACS) enzymes catalyze the conversion of S-adenosyl-L-methionine (SAM) into 1-aminocyclopropane-1-carboxylate (ACC), a direct precursor of ethylene. In Arabidopsis thaliana (Mouse-ear cress), this protein is 1-aminocyclopropane-1-carboxylate synthase 7 (ACS7).